A 130-amino-acid chain; its full sequence is Small ribosomal subunit protein uS11 (130 aa).

The protein belongs to the universal ribosomal protein uS11 family. In terms of assembly, part of the 30S ribosomal subunit. Interacts with proteins S7 and S18. Binds to IF-3.

Its function is as follows. Located on the platform of the 30S subunit, it bridges several disparate RNA helices of the 16S rRNA. Forms part of the Shine-Dalgarno cleft in the 70S ribosome. In Prochlorococcus marinus (strain MIT 9515), this protein is Small ribosomal subunit protein uS11.